The chain runs to 358 residues: 3-isopropylmalate dehydrogenase (358 aa).

77 to 90 (GPKWTNLPPDQQPE) contributes to the NAD(+) binding site. Substrate contacts are provided by Arg-98, Arg-108, Arg-137, and Asp-226. 3 residues coordinate Mg(2+): Asp-226, Asp-250, and Asp-254. 284–296 (GSAPDIAGKGIAN) contributes to the NAD(+) binding site.

The protein belongs to the isocitrate and isopropylmalate dehydrogenases family. LeuB type 1 subfamily. Homodimer. Requires Mg(2+) as cofactor. Mn(2+) serves as cofactor.

The protein localises to the cytoplasm. It catalyses the reaction (2R,3S)-3-isopropylmalate + NAD(+) = 4-methyl-2-oxopentanoate + CO2 + NADH. It functions in the pathway amino-acid biosynthesis; L-leucine biosynthesis; L-leucine from 3-methyl-2-oxobutanoate: step 3/4. Catalyzes the oxidation of 3-carboxy-2-hydroxy-4-methylpentanoate (3-isopropylmalate) to 3-carboxy-4-methyl-2-oxopentanoate. The product decarboxylates to 4-methyl-2 oxopentanoate. The polypeptide is 3-isopropylmalate dehydrogenase (leuB) (Haemophilus influenzae (strain ATCC 51907 / DSM 11121 / KW20 / Rd)).